A 28-amino-acid chain; its full sequence is Peptide 2 (28 aa).

The protein belongs to the short scorpion toxin superfamily. Potassium channel inhibitor family. Alpha-KTx 09 subfamily. As to expression, expressed by the venom gland.

The protein localises to the secreted. Functionally, blocks potassium channels. The polypeptide is Peptide 2 (Hottentotta tamulus sindicus (Scorpion)).